Consider the following 744-residue polypeptide: Tripartite motif-containing protein 2 (744 aa).

Serine 10 carries the phosphoserine modification. Residues 23–64 (CSICLERYKNPKVLPCLHTFCERCLQNYIPAHSLTLSCPVCR) form an RING-type zinc finger. The B box-type zinc-finger motif lies at 113 to 154 (GKPLSCPNHDGNVMEFYCQSCETAMCRECTEGEHAEHPTVPL). Zn(2+) is bound by residues cysteine 118, histidine 121, cysteine 141, and histidine 146. The Filamin repeat unit spans residues 320–421 (TTNAVASETV…IRGSPFKLKV (102 aa)). Threonine 371 is modified (phosphothreonine). Phosphoserine occurs at positions 375, 424, and 428. The tract at residues 432 to 462 (EGVKRRVKSPGSGHVKQKAVKRPASMYSTGK) is disordered. 6 NHL repeats span residues 473–516 (IFRV…FSND), 520–563 (KSRF…FSND), 564–605 (GKFK…FQPN), 609–652 (VTRF…FNQE), 656–699 (MLKF…FDGS), and 700–743 (GSFL…YRYL).

This sequence belongs to the TRIM/RBCC family. In terms of assembly, forms homooligomers. Interacts with TRIM3; this interaction reduces TRIM2 activity. Interacts with myosin V; myosin V may not be a substrate for ubiquitination. Interacts with NEFL. Interacts with phosphorylated BCL2L11. Interacts with SIRPA. In terms of processing, RING-type zinc finger-dependent and UBE2D1-dependent autoubiquitination. As to expression, highly expressed in the cerebellum, hippocampus, retina and spinal cord. In the cerebellum, strongest expression in Purkinje cells and in the deep cerebellar nuclei. In retina, high expression in the ganglionic cell layer, inner nuclear layer and inthe outer plexiform layer. Particularly high expression in the hippocampus, in pyramidal cells of CA1-CA3 hippocampal areas and ingranule cells of the dentate gyrus.

It localises to the cytoplasm. The catalysed reaction is S-ubiquitinyl-[E2 ubiquitin-conjugating enzyme]-L-cysteine + [acceptor protein]-L-lysine = [E2 ubiquitin-conjugating enzyme]-L-cysteine + N(6)-ubiquitinyl-[acceptor protein]-L-lysine.. It functions in the pathway protein modification; protein ubiquitination. UBE2D1-dependent E3 ubiquitin-protein ligase that mediates the ubiquitination of NEFL and of phosphorylated BCL2L11. Plays a neuroprotective function. May play a role in neuronal rapid ischemic tolerance. Plays a role in antiviral immunity and limits new world arenavirus infection independently of its ubiquitin ligase activity by decreasing virus internalization. The sequence is that of Tripartite motif-containing protein 2 (Trim2) from Mus musculus (Mouse).